A 233-amino-acid polypeptide reads, in one-letter code: Pre-hexon-linking protein VIII (233 aa).

T64 carries the phosphothreonine; by host modification. Residues 112-163 (ARHVRFRDRPSPYSSGSIKRLIIRGRGIQLNDEVVSSSTGPRPDGVFQLGGA) constitute a propeptide that is removed on maturation. S180 is modified (phosphoserine; by host).

This sequence belongs to the adenoviridae hexon-linking protein family. Interacts with the peripentonal hexons as well as the hexons in the facets. Part of a complex composed of the core-capsid bridging protein, the endosome lysis protein VI and the hexon-linking protein VIII; these interactions bridge the virus core to the capsid. Cleaved by the viral protease during virion maturation. May cause the middle segment to be shed from the capsid.

The protein resides in the virion. The protein localises to the host nucleus. Its function is as follows. Structural component of the virion that acts as a cement protein on the capsid interior and which glue the peripentonal hexons and group-of-nine hexons together. The chain is Pre-hexon-linking protein VIII from Homo sapiens (Human).